Consider the following 593-residue polypeptide: Immunoglobulin G-binding protein G (593 aa).

The N-terminal stretch at 1-33 (MEKEKKVKYFLRKSAFGLASVSAAFLVGSTVFA) is a signal peptide. Repeat copies occupy residues 104-140 (LAKA…VKDL), 179-215 (LAEA…VKDL), 254-290 (LAEA…VKAL), 303-357 (TYKL…TVTE), and 373-427 (TYKL…TVTE). The 3 X 37 AA repeats stretch occupies residues 104–290 (LAKAKADALK…AKTVEGVKAL (187 aa)). The 2 X 55 AA repeats stretch occupies residues 303–427 (TYKLILNGKT…DATKTFTVTE (125 aa)). Residues 503-567 (PGDAPTEPEK…TLPTTGEGSN (65 aa)) form a disordered region. Over residues 529-557 (AKDDAKKDDTKKEDAKKPEAKKEDAKKAE) the composition is skewed to basic and acidic residues. A 5 X 5 AA repeats of [DE]-D-A-K-K region spans residues 531–555 (DDAKKDDTKKEDAKKPEAKKEDAKK). An LPXTG sorting signal motif is present at residues 559-563 (LPTTG). Threonine 562 carries the pentaglycyl murein peptidoglycan amidated threonine modification. Positions 563–593 (GEGSNPFFTAAALAVMAGAGALAVASKRKED) are cleaved as a propeptide — removed by sortase.

It localises to the secreted. Its subcellular location is the cell wall. This is Immunoglobulin G-binding protein G (spg) from Streptococcus sp. group G.